An 87-amino-acid polypeptide reads, in one-letter code: U3-theraphotoxin-Hhn1q (87 aa).

The N-terminal stretch at 1 to 24 (MVNMKASMFLTFAGLVLLFVVCYA) is a signal peptide. Positions 25–52 (SESEEKEFPKEMLSSIFAVDNDFKQEER) are excised as a propeptide. Disulfide bonds link C54/C67, C61/C72, and C66/C79.

Belongs to the neurotoxin 10 (Hwtx-1) family. 51 (Hntx-8) subfamily. Hntx-8 sub-subfamily. Expressed by the venom gland.

The protein localises to the secreted. In terms of biological role, ion channel inhibitor. The chain is U3-theraphotoxin-Hhn1q from Cyriopagopus hainanus (Chinese bird spider).